Consider the following 424-residue polypeptide: Inhibin beta A chain (424 aa).

Positions 1-20 (MPLLWLRGFLLASCWIIVRS) are cleaved as a signal peptide. Positions 21-308 (SPTPGSEGHG…EDHPHRRRRR (288 aa)) are excised as a propeptide. The N-linked (GlcNAc...) asparagine glycan is linked to Asn-165. Over residues 264 to 275 (EVDGDGKKKDGS) the composition is skewed to basic and acidic residues. The tract at residues 264 to 306 (EVDGDGKKKDGSDGGLEEEKEQSHRPFLMLQARQSEDHPHRRR) is disordered. 4 disulfides stabilise this stretch: Cys-312/Cys-320, Cys-319/Cys-389, Cys-348/Cys-421, and Cys-352/Cys-423.

Belongs to the TGF-beta family. Dimeric, linked by one or more disulfide bonds. Inhibin A is a dimer of alpha/INHA and beta-A/INHBA. Activin A is a homodimer of beta-A/INHBA. Activin AB is a dimer of beta-A/INHBA and beta-B/INHBB. Interacts with FST and FSTL3; these interactions prevent activin A interaction to its type II receptor. Activin A interacts with ACVR2A. Activin A interacts with BMPR2. Inhibin A interacts with ACVR1; this interaction creates a non-signaling complex (NSC) that inhibits ACVR1-mediated BMP signaling. Inhibin A interacts with ACVR2A. As to expression, uterus, ovary and liver.

The protein resides in the secreted. In terms of biological role, inhibins/activins are involved in regulating a number of diverse functions such as hypothalamic and pituitary hormone secretion, gonadal hormone secretion, germ cell development and maturation, erythroid differentiation, insulin secretion, nerve cell survival, embryonic axial development or bone growth, depending on their subunit composition. Functionally, activin A is a homodimer of INHBA that plays a role in several essential biological processes including embryonic development, stem cell maintenance and differentiation, haematopoiesis, cell proliferation and tissue fibrosis. Signals through type I (such as ACVR1B or ACVR1C) and type II receptors (such as ACVR2A, ACVR2B or BMPR2) which, upon ligand binding, phosphorylate SMAD2 and SMAD3 intracellular signaling mediators that form a complex with SMAD4, translocate to the nucleus and modulate gene expression. Can also activate alternative non-canonical intracellular signaling pathways including the p38 MAPK, extracellular signal-regulated kinases 1/2 (ERK1/2) and c-Jun N-terminal kinases (JNKs) to modulate cell migration and differentiation. Alternatively, promotes osteoblastic differentiation via ACVRL1-SMAD1/5/9 pathway. In addition, can engage the type I receptor ACVR1 to form an ACVR1-activin A-type II receptor non-signaling complex (NSC) that renders receptors unavailable for engagement with BMPs, hence resulting in an apparent inhibition of ACVR1-mediated BMP signaling. Its function is as follows. Inhibin A is a dimer of alpha/INHA and beta-A/INHBA that functions as a feedback regulator in the hypothalamic-pituitary-gonadal (HPG) axis. Inhibits the secretion of FSH from the anterior pituitary gland by acting on pituitary gonadotrope cells. Antagonizes activin A by binding to the proteoglycan, betaglycan, and forming a stable complex with and, thereby, sequestering type II activin receptors while excluding type I receptor. The sequence is that of Inhibin beta A chain (Inhba) from Mus musculus (Mouse).